Consider the following 200-residue polypeptide: Elongation factor Ts (200 aa).

The involved in Mg(2+) ion dislocation from EF-Tu stretch occupies residues 81 to 84; sequence TDFV.

The protein belongs to the EF-Ts family.

The protein resides in the cytoplasm. Functionally, associates with the EF-Tu.GDP complex and induces the exchange of GDP to GTP. It remains bound to the aminoacyl-tRNA.EF-Tu.GTP complex up to the GTP hydrolysis stage on the ribosome. In Nitratidesulfovibrio vulgaris (strain DSM 19637 / Miyazaki F) (Desulfovibrio vulgaris), this protein is Elongation factor Ts.